The sequence spans 770 residues: Signal transducer and activator of transcription 3 (770 aa).

Residue Ala-2 is modified to N-acetylalanine. N6-acetyllysine is present on residues Lys-49 and Lys-87. The Essential for nuclear import signature appears at Asp-150–Met-162. In terms of domain architecture, SH2 spans Trp-580–Leu-670. Allysine; alternate occurs at positions 601, 615, and 631. N6-acetyllysine; alternate occurs at positions 601, 615, and 631. Tyr-640 bears the Phosphotyrosine; by TYK2 mark. The residue at position 685 (Lys-685) is an Allysine; alternate. N6-acetyllysine; alternate is present on Lys-685. Phosphotyrosine; by FER and PTK6 is present on Tyr-705. The residue at position 707 (Lys-707) is an N6-acetyllysine. Thr-714 carries the phosphothreonine modification. Ser-727 is subject to Phosphoserine; by DYRK2, NLK, NEK6, IRAK1, RPS6KA5, ZIPK/DAPK3 and PKC/PRKCE.

It belongs to the transcription factor STAT family. As to quaternary structure, forms a homodimer or a heterodimer with a related family member (at least STAT1). Component of a promoter-binding complex composed of STAT3, NFATC3 and NFATC4; complex formation is enhanced by calcineurin. Interacts with IL31RA, NCOA1, PELP1, SIPAR, SOCS7, STATIP1 and TMF1. Interacts with IL23R in presence of IL23. Interacts (via SH2 domain) with NLK. Interacts with ARL2BP; the interaction is enhanced by LIF and JAK1 expression. Interacts with KPNA4 and KPNA5; KPNA4 may be the primary mediator of nuclear import. Interacts with CAV2; the interaction is increased on insulin-induced tyrosine phosphorylation of CAV2 and leads to STAT3 activation. Interacts with ARL2BP; interaction is enhanced with ARL2. Interacts with NEK6. Binds to CDK9 when activated and nuclear. Interacts with BMX. Interacts with ZIPK/DAPK3. Interacts with PIAS3; the interaction occurs on stimulation by IL6, CNTF or OSM and inhibits the DNA binding activity of STAT3. In prostate cancer cells, interacts with PRKCE and promotes DNA binding activity of STAT3. Interacts with STMN3, antagonizing its microtubule-destabilizing activity. Interacts with the 'Lys-129' acetylated form of BIRC5/survivin. Interacts with FER. Interacts (via SH2 domain) with EIF2AK2/PKR (via the kinase catalytic domain). Interacts with FGFR4. Interacts with INPP5F; the interaction is independent of STAT3 Tyr-705 phosphorylation status. Interacts with OCIAD1 and OCIAD2. Interacts (unphosphorylated or phosphorylated at Ser-727) with PHB1. Interacts and may form heterodimers with NHLH1. Found in a complex with SLC39A6, SLC39A10 and with the 'Ser-727' phosphorylated form of STAT3 throughout mitosis. Interacts (when acetylated) with EP300 (via bromo domain); interaction takes place following STAT3 acetylation by EP300 and promotes enhanceosome assembly. Interacts (when acetylated) with BRD2 (via bromo domain); interaction promotes STAT3 recruitment to chromatin and T-helper Th17 cell differentiation. Interacts with FAM220A/SIPAR; the interaction occurs in both the nucleus and the cytoplasm, is enhanced by IL6 and promotes STAT3 dephosphorylation. Interacts in both unphosphorylated and phosphorylated forms with FAM220A but interacts preferentially in the phosphorylated form in the nucleus. Interacts with PTPN2; the interaction is promoted by FAM220A and leads to STAT3 dephosphorylation which negatively regulates STAT3 transcriptional activator activity. Activated through tyrosine phosphorylation by BMX. Tyrosine phosphorylated in response to IL-6, IL-11, CNTF, LIF, CSF-1, EGF, PDGF, IFN-alpha and OSM. Tyrosine phosphorylated in response to constitutively activated FGFR1, FGFR2, FGFR3 and FGFR4. Phosphorylated on serine upon DNA damage, probably by ATM or ATR. Serine phosphorylation is important for the formation of stable DNA-binding STAT3 homodimers and maximal transcriptional activity. ARL2BP may participate in keeping the phosphorylated state of STAT3 within the nucleus. Tyrosine phosphorylated upon stimulation with EGF. Upon LPS challenge, phosphorylated within the nucleus by IRAK1. Phosphorylated on Ser-727 by RPS6KA5. Dephosphorylation on tyrosine residues by PTPN2 negatively regulates IL6/interleukin-6 signaling. Phosphorylation at Tyr-705 by FER, isoform M2 of PKM (PKM2) or PTK6 leads to an increase of its transcriptional activity. Phosphorylation at Tyr-705 is increased in the presence of calcineurin. Phosphorylation at Tyr-640 by TYK2 negatively regulates transcriptional activity. In terms of processing, acetylated on lysine residues by EP300/p300, promoting its activation. Acetylation at Lys-49 and Lys-87 by EP300/p300 promotes its activation. Acetylation at Lys-87 by EP300/p300 promotes its association with BRD2 and recruitment to chromatin. Deacetylated at Lys-49 and Lys-87 by HDAC1. Acetylation at Lys-685 by EP300/p300 promotes its homodimerization and activation. Deacetylated at Lys-685 by HDAC3. Acetylated on lysine residues by CREBBP. Deacetylation by LOXL3 leads to disrupt STAT3 dimerization and inhibit STAT3 transcription activity. Oxidation of lysine residues to allysine on STAT3 preferentially takes place on lysine residues that are acetylated. Post-translationally, some lysine residues are oxidized to allysine by LOXL3, leading to disrupt STAT3 dimerization and inhibit STAT3 transcription activity. Oxidation of lysine residues to allysine on STAT3 preferentially takes place on lysine residues that are acetylated.

It localises to the cytoplasm. The protein localises to the nucleus. In terms of biological role, signal transducer and transcription activator that mediates cellular responses to interleukins, KITLG/SCF, LEP and other growth factors. Once activated, recruits coactivators, such as NCOA1 or MED1, to the promoter region of the target gene. May mediate cellular responses to activated FGFR1, FGFR2, FGFR3 and FGFR4. Upon activation of IL6ST/gp130 signaling by interleukin-6 (IL6), binds to the IL6-responsive elements identified in the promoters of various acute-phase protein genes. Activated by IL31 through IL31RA. Acts as a regulator of inflammatory response by regulating differentiation of naive CD4(+) T-cells into T-helper Th17 or regulatory T-cells (Treg): acetylation promotes its transcription activity and cell differentiation while deacetylation and oxidation of lysine residues by LOXL3 inhibits differentiation. Involved in cell cycle regulation by inducing the expression of key genes for the progression from G1 to S phase, such as CCND1. Mediates the effects of LEP on melanocortin production, body energy homeostasis and lactation. May play an apoptotic role by transctivating BIRC5 expression under LEP activation. Cytoplasmic STAT3 represses macroautophagy by inhibiting EIF2AK2/PKR activity. Plays a crucial role in basal beta cell functions, such as regulation of insulin secretion. Following JAK/STAT signaling activation and as part of a complex with NFATC3 and NFATC4, binds to the alpha-beta E4 promoter region of CRYAB and activates transcription in cardiomyocytes. Plays an important role in host defense in methicillin-resistant S.aureus lung infection by regulating the expression of the antimicrobial lectin REG3G. The sequence is that of Signal transducer and activator of transcription 3 (STAT3) from Bos taurus (Bovine).